Here is a 268-residue protein sequence, read N- to C-terminus: GTP cyclohydrolase III (268 aa).

The protein belongs to the archaeal-type GTP cyclohydrolase family. In terms of assembly, homotrimer. The cofactor is Mg(2+).

It carries out the reaction GTP + 3 H2O = 2-amino-5-formylamino-6-(5-phospho-D-ribosylamino)pyrimidin-4(3H)-one + 2 phosphate + 2 H(+). Functionally, catalyzes the formation of 2-amino-5-formylamino-6-ribofuranosylamino-4(3H)-pyrimidinone ribonucleotide monophosphate and inorganic phosphate from GTP. Also has an independent pyrophosphate phosphohydrolase activity. The polypeptide is GTP cyclohydrolase III (gch3) (Methanocaldococcus jannaschii (strain ATCC 43067 / DSM 2661 / JAL-1 / JCM 10045 / NBRC 100440) (Methanococcus jannaschii)).